The sequence spans 112 residues: Putative movement protein (112 aa).

The chain crosses the membrane as a helical span at residues 27-47 (IGIIMLCIVGIVVLWVLIILC). The interval 77–112 (TGTPFEETGPHRERRWAERRTEATNQNNNDNVNRFS) is disordered. Positions 84-98 (TGPHRERRWAERRTE) are enriched in basic and acidic residues. Residues 101 to 112 (NQNNNDNVNRFS) show a composition bias toward polar residues.

Belongs to the nanovirus movement protein family.

The protein localises to the host cell membrane. Functionally, may transport viral genome to neighboring plant cells directly through plasmosdesmata, without any budding. The movement protein allows efficient cell to cell propagation, by bypassing the host cell wall barrier. This chain is Putative movement protein (DNA-M), found in Subterranean clover stunt virus (strain F) (SCSV).